The primary structure comprises 245 residues: Enolase-phosphatase E1 (245 aa).

Mg(2+) is bound by residues D14 and E16. Substrate-binding positions include 141 to 142 (SS) and K175. A Mg(2+)-binding site is contributed by D200.

This sequence belongs to the HAD-like hydrolase superfamily. MasA/MtnC family. Monomer. Requires Mg(2+) as cofactor.

It is found in the cytoplasm. The protein resides in the nucleus. It catalyses the reaction 5-methylsulfanyl-2,3-dioxopentyl phosphate + H2O = 1,2-dihydroxy-5-(methylsulfanyl)pent-1-en-3-one + phosphate. It functions in the pathway amino-acid biosynthesis; L-methionine biosynthesis via salvage pathway; L-methionine from S-methyl-5-thio-alpha-D-ribose 1-phosphate: step 3/6. Its pathway is amino-acid biosynthesis; L-methionine biosynthesis via salvage pathway; L-methionine from S-methyl-5-thio-alpha-D-ribose 1-phosphate: step 4/6. Bifunctional enzyme that catalyzes the enolization of 2,3-diketo-5-methylthiopentyl-1-phosphate (DK-MTP-1-P) into the intermediate 2-hydroxy-3-keto-5-methylthiopentenyl-1-phosphate (HK-MTPenyl-1-P), which is then dephosphorylated to form the acireductone 1,2-dihydroxy-3-keto-5-methylthiopentene (DHK-MTPene). This chain is Enolase-phosphatase E1, found in Drosophila grimshawi (Hawaiian fruit fly).